The sequence spans 487 residues: Serine/threonine-protein kinase 4 (487 aa).

Residue Met1 is modified to N-acetylmethionine. The residue at position 3 (Thr3) is a Phosphothreonine. Residues 30 to 281 form the Protein kinase domain; sequence FDVLEKLGEG…ATQLLQHPFV (252 aa). ATP contacts are provided by residues 36–44 and Lys59; that span reads LGEGSYGSV. Asp149 functions as the Proton acceptor in the catalytic mechanism. Thr183 carries the phosphothreonine; by autocatalysis modification. At Ser265 the chain carries Phosphoserine. A coiled-coil region spans residues 290 to 310; sequence LRDLINEAMDVKLKRQESQQR. Residues 303–312 show a composition bias toward basic and acidic residues; sequence KRQESQQREV. The disordered stretch occupies residues 303-332; sequence KRQESQQREVDQDDEENSEEDEMDSGTMVR. Over residues 313–326 the composition is skewed to acidic residues; sequence DQDDEENSEEDEMD. The residue at position 320 (Ser320) is a Phosphoserine. Phosphothreonine is present on residues Thr340 and Thr367. Thr387 is modified (phosphothreonine; by PKB/AKT1). Phosphoserine is present on residues Ser410 and Ser414. A Phosphotyrosine modification is found at Tyr433. In terms of domain architecture, SARAH spans 433–480; the sequence is YEFLKSWTVEDLQKRLLALDPMMEQEIEEIRQKYQSKRQPILDAIEAK.

This sequence belongs to the protein kinase superfamily. STE Ser/Thr protein kinase family. STE20 subfamily. Homodimer; mediated via the coiled-coil region. Interacts with NORE1, which inhibits autoactivation. Interacts with and stabilizes SAV1. Interacts with RASSF1. Interacts with FOXO3. Interacts with RASSF2 (via SARAH domain). Interacts with AR, PKB/AKT1, TNNI3 and SIRT1. Interacts with DLG5 (via PDZ domain 3). Interacts with MARK3 and SCRIB in the presence of DLG5. Mg(2+) is required as a cofactor. Autophosphorylated on serine and threonine residues. Phosphorylation at Thr-387 by PKB/AKT1, leads to inhibition of its: kinase activity, nuclear translocation and autophosphorylation at Thr-183. It also diminishes its cleavage by caspases and its ability to phosphorylate FOXO3. In terms of processing, proteolytically cleaved by caspase-3 during apoptosis at Asp-326 and Asp-349 resulting in a 37 kDa or a 39 kDa subunit respectively. The 39 kDa subunit is further cleaved into the 37 kDa form. Proteolytic cleavage results in kinase activation and nuclear translocation of the truncated form (MST1/N). It is less likely that cleavage at Asp-349 is a prerequisite for activation as this site is not conserved in the murine ortholog.

It localises to the cytoplasm. Its subcellular location is the nucleus. It carries out the reaction L-seryl-[protein] + ATP = O-phospho-L-seryl-[protein] + ADP + H(+). The enzyme catalyses L-threonyl-[protein] + ATP = O-phospho-L-threonyl-[protein] + ADP + H(+). Inhibited by the C-terminal non-catalytic region. Activated by caspase-cleavage. Full activation also requires homodimerization and autophosphorylation of Thr-183. Activated by RASSF1 which acts by preventing its dephosphorylation. In terms of biological role, stress-activated, pro-apoptotic kinase which, following caspase-cleavage, enters the nucleus and induces chromatin condensation followed by internucleosomal DNA fragmentation. Key component of the Hippo signaling pathway which plays a pivotal role in organ size control and tumor suppression by restricting proliferation and promoting apoptosis. The core of this pathway is composed of a kinase cascade wherein STK3/MST2 and STK4/MST1, in complex with its regulatory protein SAV1, phosphorylates and activates LATS1/2 in complex with its regulatory protein MOB1, which in turn phosphorylates and inactivates YAP1 oncoprotein and WWTR1/TAZ. Phosphorylation of YAP1 by LATS2 inhibits its translocation into the nucleus to regulate cellular genes important for cell proliferation, cell death, and cell migration. STK3/MST2 and STK4/MST1 are required to repress proliferation of mature hepatocytes, to prevent activation of facultative adult liver stem cells (oval cells), and to inhibit tumor formation. Phosphorylates 'Ser-14' of histone H2B (H2BS14ph) during apoptosis. Phosphorylates FOXO3 upon oxidative stress, which results in its nuclear translocation and cell death initiation. Phosphorylates MOBKL1A, MOBKL1B and RASSF2. Phosphorylates TNNI3 (cardiac Tn-I) and alters its binding affinity to TNNC1 (cardiac Tn-C) and TNNT2 (cardiac Tn-T). Phosphorylates FOXO1 on 'Ser-212' and regulates its activation and stimulates transcription of PMAIP1 in a FOXO1-dependent manner. Phosphorylates SIRT1 and inhibits SIRT1-mediated p53/TP53 deacetylation, thereby promoting p53/TP53 dependent transcription and apoptosis upon DNA damage. Acts as an inhibitor of PKB/AKT1. Phosphorylates AR on 'Ser-650' and suppresses its activity by intersecting with PKB/AKT1 signaling and antagonizing formation of AR-chromatin complexes. This is Serine/threonine-protein kinase 4 (STK4) from Aotus nancymaae (Ma's night monkey).